The sequence spans 2083 residues: Non-reducing polyketide synthase curS2 (2083 aa).

The N-terminal acylcarrier protein transacylase domain (SAT) stretch occupies residues 9 to 246 (LLFGDVTDPW…NELDIHALQH (238 aa)). Positions 366–798 (RDGIAIVGMA…GGNACLLLED (433 aa)) constitute a Ketosynthase family 3 (KS3) domain. Catalysis depends on for beta-ketoacyl synthase activity residues cysteine 543, histidine 678, and histidine 717. Positions 895–1201 (VFVFTGQGSH…THTLQPNTHN (307 aa)) are malonyl-CoA:ACP transacylase (MAT) domain. Residue serine 986 is the For acyl/malonyl transferase activity of the active site. The tract at residues 1276–1415 (AQYLVSKSSS…DPAKTQADWD (140 aa)) is N-terminal hotdog fold. In terms of domain architecture, PKS/mFAS DH spans 1276–1585 (AQYLVSKSSS…YQELPRVTWK (310 aa)). Residues 1285–1581 (SPKVQVVFRA…IDLRYQELPR (297 aa)) are product template (PT) domain. Positions 1437–1585 (GHRMQPEVFY…YQELPRVTWK (149 aa)) are C-terminal hotdog fold. The 78-residue stretch at 1637-1714 (DFDEGLVDAI…DLRRAFGANK (78 aa)) folds into the Carrier domain. Serine 1674 carries the O-(pantetheine 4'-phosphoryl)serine modification. The disordered stretch occupies residues 1710-1790 (FGANKPKTSK…KMDETDTSPA (81 aa)). Low complexity predominate over residues 1718–1736 (SKPQPGSTTPSSSQSSIPS). Positions 1745 to 1754 (MSDTASSLGS) are enriched in polar residues. The span at 1771-1784 (LEPKPNHHLGKMDE) shows a compositional bias: basic and acidic residues. The segment at 1811 to 2058 (MMADGTGTIA…LSVAGDHLDL (248 aa)) is thioesterase (TE) domain. The active-site For thioesterase activity is the histidine 2065.

It participates in mycotoxin biosynthesis. Non-reducing polyketide synthase; part of the gene cluster that mediates the biosynthesis of 10,11-dehydrocurvularin, a prevalent fungal phytotoxin with heat shock response and immune-modulatory activities. The highly reducing polyketide synthase curS1 is responsible for biosynthesis up to the tetraketide stage. The non-reducing polyketide synthase curS2 then conducts four additional chain extension cycles, producing the unreduced part of the nascent octaketide from C-1 to C-8 in 10,11-dehydrocurvularin. This chain is Non-reducing polyketide synthase curS2, found in Aspergillus terreus.